Consider the following 266-residue polypeptide: Blue copper protein (266 aa).

The N-terminal stretch at 1–24 is a signal peptide; it reads MAYSKILFCFMIGFVGFLPAITMA. Phytocyanin domains are found at residues 25–56, 57–102, and 116–216; these read TQYLVGDDRGWTLDFDYQTWAKNKTFKVGDTL, APPP…TVED, and TEYW…TVEG. Asn-47 carries an N-linked (GlcNAc...) asparagine glycan. His-156 provides a ligand contact to Cu cation. Residue Asn-162 is glycosylated (N-linked (GlcNAc...) asparagine). Residues Cys-169 and Cys-203 are joined by a disulfide bond. Positions 197, 202, and 208 each coordinate Cu cation. The helical transmembrane segment at 245-265 threads the bilayer; sequence ITSPYKMFVGGAVSIWTILTL.

Its subcellular location is the membrane. In Petunia hybrida (Petunia), this protein is Blue copper protein.